A 730-amino-acid chain; its full sequence is Tubulin polyglutamylase ttll-5 (730 aa).

The 359-residue stretch at 120–478 (RLRLTFKMMR…PLLDRKIIDS (359 aa)) folds into the TTL domain. Residues 278–281 (SRYL), K291, and D293 contribute to the ATP site. Residues 594 to 618 (KKNTKNSSGSSKASSSSASASSSSS) form a disordered region. Residues 600-618 (SSGSSKASSSSASASSSSS) are compositionally biased toward low complexity.

The protein belongs to the tubulin--tyrosine ligase family. Expressed in body wall muscles. Not expressed in sensory neurons.

It catalyses the reaction L-glutamyl-[protein] + L-glutamate + ATP = gamma-L-glutamyl-L-glutamyl-[protein] + ADP + phosphate + H(+). Polyglutamylase which preferentially modifies alpha-tubulin. Involved in the side-chain initiation step of the polyglutamylation reaction rather than in the elongation step. Together with ttll-4 and ttll-11, required for male mating. Probably by regulating microtubule stability via the glutamylation of tubulin, negatively regulates axon regrowth after injury in PLM neurons. In Caenorhabditis elegans, this protein is Tubulin polyglutamylase ttll-5.